Reading from the N-terminus, the 104-residue chain is Iron-sulfur cluster assembly protein CyaY (104 aa).

It belongs to the frataxin family.

Involved in iron-sulfur (Fe-S) cluster assembly. May act as a regulator of Fe-S biogenesis. In Vibrio vulnificus (strain CMCP6), this protein is Iron-sulfur cluster assembly protein CyaY.